A 452-amino-acid polypeptide reads, in one-letter code: SAGA complex/transcription factor TFIID complex subunit Taf6 (452 aa).

The Histone-fold domain occupies 4 to 68; sequence TVWNIESIKD…TSADISSALR (65 aa).

This sequence belongs to the TAF6 family. As to quaternary structure, component of the 1.8 MDa SAGA (Spt-Ada-Gcn5 acetyltransferase) complex, which is composed of 19 subunits tra1, spt7, taf5, ngg1/ada3, sgf73, spt20, spt8, taf12, taf6, hfi1/ada1, ubp8, gcn5, ada2, spt3, sgf29, taf10, taf9, sgf11 and sus1. The SAGA complex is composed of 4 modules, namely the HAT (histone acetyltransferase) module (gcn5, ada2, ngg1/ada3 and sgf29), the DUB (deubiquitinating) module (ubp8, sgf11, sgf73 and sus1), the core or TAF (TBP-associated factor) module (taf5, taf6, taf9, taf10 and taf12), and the Tra1 or SPT (Suppressor of Ty) module (tra1, hfi1/ada1, spt3, spt7, spt8 and spt20). The Tra1/SPT module binds activators, the core module recruits TBP (TATA-binding protein), the HAT module contains the histone H3 acetyltransferase gcn5, and the DUB module comprises the histone H2B deubiquitinase ubp8. Interacts with gcn5, taf5 and taf73. Component of the 1.2 MDa TFIID complex, which is composed of TATA-binding protein (TBP) and the 14 TBP-associated factors (TAFs). It comprises 1 copy of each taf1, taf2, taf3, taf7, taf8, taf11, taf13, 2 copies of each taf4, taf5, taf6, taf9, taf10, taf12, and 3 copies of taf14. In TFIID, taf6 heterodimerizes with taf9, forming ultimately an octamer consisting of a taf6-taf9 heterotetramer core flanked by taf4-taf12 dimers on either side, similar to the histone H2A-H2B-H3-H4 octamer.

It is found in the nucleus. In terms of biological role, functions as a component of both the DNA-binding general transcription initiation factor complex TFIID and the transcription coactivator SAGA complex. Binding of TFIID to a promoter (with or without TATA element) is the initial step in pre-initiation complex (PIC) formation. TFIID plays a key role in the regulation of gene expression by RNA polymerase II through different activities such as transcription activator interaction, core promoter recognition and selectivity, TFIIA and TFIIB interaction, chromatin modification (histone acetylation by TAF1), facilitation of DNA opening and initiation of transcription. SAGA acts as a general cofactor required for essentially all RNA polymerase II transcription. At the promoters, SAGA is required for transcription pre-initiation complex (PIC) recruitment. It influences RNA polymerase II transcriptional activity through different activities such as TBP interaction (via core/TAF module) and promoter selectivity, interaction with transcription activators (via Tra1/SPT module), and chromatin modification through histone acetylation (via HAT module) and deubiquitination (via DUB module). SAGA preferentially acetylates histones H3 (to form H3K9ac, H3K14ac, H3K18ac and H3K23ac) and H2B and deubiquitinates histone H2B. SAGA interacts with DNA via upstream activating sequences (UASs). This is SAGA complex/transcription factor TFIID complex subunit Taf6 from Schizosaccharomyces pombe (strain 972 / ATCC 24843) (Fission yeast).